The sequence spans 1168 residues: Pre-mRNA-splicing factor ATP-dependent RNA helicase prp22 (1168 aa).

Disordered stretches follow at residues 77-100 and 144-197; these read KDDI…HDLD and TLAK…RSSR. Residues 84–94 show a composition bias toward low complexity; the sequence is NVNNGSNSVNG. Residues 149–173 are compositionally biased toward basic and acidic residues; the sequence is RRNDRDSRRDERHYLNGIRERRERS. A compositionally biased stretch (low complexity) spans 184 to 197; it reads TSISGQSHSSRSSR. Residues 207–280 enclose the S1 motif domain; the sequence is YGIYSGVVSG…SAKRISLSMK (74 aa). The segment at 287–314 is disordered; that stretch reads GEDLNPDQVSRSTKKGSGANAIPLSAQN. Residues 520-684 enclose the Helicase ATP-binding domain; the sequence is LEAVSKNQIL…FYKCPIFTIP (165 aa). Residue 533–540 participates in ATP binding; it reads GETGSGKT. The DEAH box signature appears at 631 to 634; the sequence is DEAH. Residues 702–882 enclose the Helicase C-terminal domain; sequence YLDAALMTVM…HTILMLKAMG (181 aa).

It belongs to the DEAD box helicase family. DEAH subfamily. DDX8/PRP22 sub-subfamily. Belongs to the 40S cdc5-associated complex (or cwf complex), a spliceosome sub-complex reminiscent of a late-stage spliceosome composed of the U2, U5 and U6 snRNAs and at least brr2, cdc5, cwf2/prp3, cwf3/syf1, cwf4/syf3, cwf5/ecm2, spp42/cwf6, cwf7/spf27, cwf8, cwf9, cwf10, cwf11, cwf12, prp45/cwf13, cwf14, cwf15, cwf16, cwf17, cwf18, cwf19, cwf20, cwf21, cwf22, cwf23, cwf24, cwf25, cwf26, cyp7/cwf27, cwf28, cwf29/ist3, lea1, msl1, prp5/cwf1, prp10, prp12/sap130, prp17, prp22, sap61, sap62, sap114, sap145, slu7, smb1, smd1, smd3, smf1, smg1 and syf2.

It localises to the nucleus. It carries out the reaction ATP + H2O = ADP + phosphate + H(+). Acts late in the splicing of pre-mRNA. Required for the splicing of introns with a branch nucleotide to 3'-splice site distance greater or equal to 15. Mediates the release of the spliced mRNA from spliceosomes. The protein is Pre-mRNA-splicing factor ATP-dependent RNA helicase prp22 (prp22) of Schizosaccharomyces pombe (strain 972 / ATCC 24843) (Fission yeast).